Consider the following 220-residue polypeptide: MAILFAVVARGTTILAKHAWCGGNFLEVTEQILAKIPSENNKLTYSHGNYLFHYICQDRIVYLCITDDDFERSRAFNFLNEIKKRFQTTYGSRAQTALPYAMNSEFSSVLAAQLKHHSENKGLDKVMETQAQVDELKGIMVRNIDLVAQRGERLELLIDKTENLVDSSVTFKTTSRNLARAMCMKNLKLTIIIIIISVVFIYIIVSPLCGGFTWPNCVKK.

Alanine 2 bears the N-acetylalanine mark. Residues 2 to 188 (AILFAVVARG…ARAMCMKNLK (187 aa)) are Cytoplasmic-facing. In terms of domain architecture, Longin spans 7-110 (VVARGTTILA…AMNSEFSSVL (104 aa)). The region spanning 125–185 (KVMETQAQVD…RNLARAMCMK (61 aa)) is the v-SNARE coiled-coil homology domain. 2 positions are modified to phosphoserine: serine 167 and serine 168. The helical; Anchor for type IV membrane protein transmembrane segment at 189–209 (LTIIIIIISVVFIYIIVSPLC) threads the bilayer. Topologically, residues 210-220 (GGFTWPNCVKK) are vesicular.

The protein belongs to the synaptobrevin family. Component of the SNARE complex composed of STX4, SNAP23 and VAMP7 that binds SYT7 during lysosomal exocytosis. Component of the SNARE complex composed of STX7, STX8, VAMP7 and VTI1B that is required for heterotypic fusion of late endosomes with lysosomes. May interact with STX17. Interacts with PICALM. Interacts with RAB21.

It is found in the cytoplasmic vesicle. Its subcellular location is the secretory vesicle membrane. The protein resides in the golgi apparatus. It localises to the trans-Golgi network membrane. The protein localises to the late endosome membrane. It is found in the lysosome membrane. Its subcellular location is the endoplasmic reticulum membrane. The protein resides in the phagosome membrane. It localises to the synapse. The protein localises to the synaptosome. Its function is as follows. Involved in the targeting and/or fusion of transport vesicles to their target membrane during transport of proteins from the early endosome to the lysosome. Required for heterotypic fusion of late endosomes with lysosomes and homotypic lysosomal fusion. Required for calcium regulated lysosomal exocytosis. Involved in the export of chylomicrons from the endoplasmic reticulum to the cis Golgi. Required for exocytosis of mediators during eosinophil and neutrophil degranulation, and target cell killing by natural killer cells. Required for focal exocytosis of late endocytic vesicles during phagosome formation. The protein is Vesicle-associated membrane protein 7 (VAMP7) of Bos taurus (Bovine).